The chain runs to 323 residues: Low affinity immunoglobulin gamma Fc region receptor II-c (323 aa).

The N-terminal stretch at 1–42 (MGILSFLPVLATESDWADCKSPQPWGHMLLWTAVLFLAPVAG) is a signal peptide. Topologically, residues 43–223 (TPAAPPKAVL…VQAPSSSPMG (181 aa)) are extracellular. 2 consecutive Ig-like C2-type domains span residues 48-127 (PKAV…VHLT) and 131-213 (EWLV…VTIT). 2 cysteine pairs are disulfide-bonded: Cys-71/Cys-113 and Cys-152/Cys-196. Residues Asn-106, Asn-180, and Asn-187 are each glycosylated (N-linked (GlcNAc...) asparagine). The chain crosses the membrane as a helical span at residues 224-246 (IIVAVVTGIAVAAIVAAVVALIY). Over 247 to 323 (CRKKRISANS…PPNDHVNSNN (77 aa)) the chain is Cytoplasmic. The interval 277-323 (KRQPEETNNDYETADGGYMTLNPRAPTDDDKNIYLTLPPNDHVNSNN) is disordered. A phosphotyrosine; by SRC-type Tyr-kinases mark is found at Tyr-294 and Tyr-310.

Post-translationally, phosphorylated by SRC-type Tyr-kinases such as LYN, BLK, FYN and SYK. As to expression, isoform IIC1 is detected in monocytes, macrophages, polymorphonuclear cells and natural killer cells.

It is found in the cytoplasm. The protein resides in the cell membrane. Its function is as follows. Receptor for the Fc region of complexed immunoglobulins gamma. Low affinity receptor. Involved in a variety of effector and regulatory functions such as phagocytosis of immune complexes and modulation of antibody production by B-cells. This is Low affinity immunoglobulin gamma Fc region receptor II-c (FCGR2C) from Homo sapiens (Human).